The following is a 160-amino-acid chain: Cytochrome b6-f complex subunit 4 (160 aa).

Transmembrane regions (helical) follow at residues 36 to 56 (LLYI…GLSV), 95 to 115 (LLGV…PFIE), and 127 to 147 (PVAM…GIGA).

Belongs to the cytochrome b family. PetD subfamily. As to quaternary structure, the 4 large subunits of the cytochrome b6-f complex are cytochrome b6, subunit IV (17 kDa polypeptide, petD), cytochrome f and the Rieske protein, while the 4 small subunits are petG, petL, petM and petN. The complex functions as a dimer.

The protein resides in the plastid. Its subcellular location is the chloroplast thylakoid membrane. Functionally, component of the cytochrome b6-f complex, which mediates electron transfer between photosystem II (PSII) and photosystem I (PSI), cyclic electron flow around PSI, and state transitions. This is Cytochrome b6-f complex subunit 4 from Guillardia theta (Cryptophyte).